The primary structure comprises 100 residues: MTPWFLYLIRTADNKLYTGITTDVERRYQQHQSGKGAKALRGKGELTLAFSAPVGDRSLALRAEYRVKQLTKRQKERLVAEGTGFAELLSSLQTPKIKSD.

Residues 2–77 (TPWFLYLIRT…KQLTKRQKER (76 aa)) enclose the GIY-YIG domain.

It belongs to the UPF0213 family.

In Shigella dysenteriae serotype 1 (strain Sd197), this protein is UPF0213 protein YhbQ.